The chain runs to 308 residues: Transcription factor zip-2 (308 aa).

Residues 217–229 (QSSSSSTVETTIT) are compositionally biased toward polar residues. Positions 217 to 277 (QSSSSSTVET…RESKEERERL (61 aa)) are disordered. In terms of domain architecture, bZIP spans 242-305 (SSDYRHKRDK…EDYKRLVMMF (64 aa)). The basic motif stretch occupies residues 246-276 (RHKRDKNNLASQKSRQKRQAKIRESKEERER). The span at 266–277 (KIRESKEERERL) shows a compositional bias: basic and acidic residues. The leucine-zipper stretch occupies residues 277–291 (LEKRKVQLQAMVLTL).

Belongs to the bZIP family. C/EBP subfamily. In terms of tissue distribution, expressed in the pharynx and throughout the intestine.

The protein localises to the nucleus. Its function is as follows. Transcription factor that binds to the promoter and the enhancer regions of target genes. May act together with the bZIP transcription factor, cebp-2. Involved in responding to mitochondrial damage. Plays a role in the delay of age-associated mitochondrial fragmentation and muscle decline. Has a protective role in response to infection by the Gram-negative bacterium P.aeruginosa. Required to prevent P.aeruginosa ToxA-mediated lethality. Required for the activation of several infection response genes including irg-1 and irg-2 following P.aeruginosa infection; target gene activation may involve effects of the bacterial toxin, ToxA, and perhaps other toxins. This chain is Transcription factor zip-2, found in Caenorhabditis elegans.